Here is a 257-residue protein sequence, read N- to C-terminus: Large ribosomal subunit protein uL2 (257 aa).

Residues 207–231 form a disordered region; the sequence is VEHPFGGGNHQHIGKPSTIRRDAPA.

This sequence belongs to the universal ribosomal protein uL2 family. As to quaternary structure, component of the large ribosomal subunit.

The protein localises to the cytoplasm. In terms of biological role, component of the large ribosomal subunit. The ribosome is a large ribonucleoprotein complex responsible for the synthesis of proteins in the cell. The polypeptide is Large ribosomal subunit protein uL2 (rpl8) (Xenopus tropicalis (Western clawed frog)).